The chain runs to 319 residues: Cytochrome f (319 aa).

The signal sequence occupies residues Met1 to Ala35. Residues Phe36, Cys56, Cys59, and His60 each coordinate heme. Residues Ile285 to Lys305 traverse the membrane as a helical segment.

This sequence belongs to the cytochrome f family. The 4 large subunits of the cytochrome b6-f complex are cytochrome b6, subunit IV (17 kDa polypeptide, petD), cytochrome f and the Rieske protein, while the 4 small subunits are PetG, PetL, PetM and PetN. The complex functions as a dimer. Heme serves as cofactor.

The protein localises to the plastid. Its subcellular location is the chloroplast thylakoid membrane. In terms of biological role, component of the cytochrome b6-f complex, which mediates electron transfer between photosystem II (PSII) and photosystem I (PSI), cyclic electron flow around PSI, and state transitions. The polypeptide is Cytochrome f (Staurastrum punctulatum (Green alga)).